Consider the following 270-residue polypeptide: 5'-AMP-activated protein kinase subunit beta-1 (270 aa).

Residues 1–46 form a disordered region; it reads MGNTSSERAALERHGGHKTPRRDSSGGTKDGDRPKILMDSPEDADL. Glycine 2 is lipidated: N-myristoyl glycine. Phosphothreonine is present on threonine 4. A phosphoserine mark is found at serine 5 and serine 6. A Phosphothreonine modification is found at threonine 19. Basic and acidic residues predominate over residues 21-36; the sequence is RRDSSGGTKDGDRPKI. A phosphoserine; by autocatalysis mark is found at serine 24 and serine 25. A phosphoserine mark is found at serine 40, serine 96, and serine 101. Residues 68–163 are glycogen-binding domain; it reads EVNDKAPAQA…QVKKTDFEVF (96 aa). Phosphoserine; by autocatalysis is present on serine 108. Threonine 148 is modified (phosphothreonine). Serine 182 carries the post-translational modification Phosphoserine.

This sequence belongs to the 5'-AMP-activated protein kinase beta subunit family. As to quaternary structure, AMPK is a heterotrimer of an alpha catalytic subunit (PRKAA1 or PRKAA2), a beta (PRKAB1 or PRKAB2) and a gamma non-catalytic subunits (PRKAG1, PRKAG2 or PRKAG3). Interacts with FNIP1 and FNIP2. Post-translationally, phosphorylated when associated with the catalytic subunit (PRKAA1 or PRKAA2). Phosphorylated by ULK1; leading to negatively regulate AMPK activity and suggesting the existence of a regulatory feedback loop between ULK1 and AMPK.

Functionally, non-catalytic subunit of AMP-activated protein kinase (AMPK), an energy sensor protein kinase that plays a key role in regulating cellular energy metabolism. In response to reduction of intracellular ATP levels, AMPK activates energy-producing pathways and inhibits energy-consuming processes: inhibits protein, carbohydrate and lipid biosynthesis, as well as cell growth and proliferation. AMPK acts via direct phosphorylation of metabolic enzymes, and by longer-term effects via phosphorylation of transcription regulators. Also acts as a regulator of cellular polarity by remodeling the actin cytoskeleton; probably by indirectly activating myosin. Beta non-catalytic subunit acts as a scaffold on which the AMPK complex assembles, via its C-terminus that bridges alpha (PRKAA1 or PRKAA2) and gamma subunits (PRKAG1, PRKAG2 or PRKAG3). The chain is 5'-AMP-activated protein kinase subunit beta-1 (PRKAB1) from Pongo abelii (Sumatran orangutan).